Here is a 238-residue protein sequence, read N- to C-terminus: Ribonuclease PH (238 aa).

Residues Arg-86 and 124–126 each bind phosphate; that span reads GTR.

The protein belongs to the RNase PH family. Homohexameric ring arranged as a trimer of dimers.

It catalyses the reaction tRNA(n+1) + phosphate = tRNA(n) + a ribonucleoside 5'-diphosphate. In terms of biological role, phosphorolytic 3'-5' exoribonuclease that plays an important role in tRNA 3'-end maturation. Removes nucleotide residues following the 3'-CCA terminus of tRNAs; can also add nucleotides to the ends of RNA molecules by using nucleoside diphosphates as substrates, but this may not be physiologically important. Probably plays a role in initiation of 16S rRNA degradation (leading to ribosome degradation) during starvation. The sequence is that of Ribonuclease PH from Shigella boydii serotype 18 (strain CDC 3083-94 / BS512).